The following is a 367-amino-acid chain: Avirulence protein ATR5 (367 aa).

The N-terminal stretch at 1 to 16 is a signal peptide; that stretch reads MRLISPALVVSTAIQA. N-linked (GlcNAc...) asparagine glycosylation occurs at asparagine 20. Residues 33-65 form a disordered region; that stretch reads NPLASAHPPDVGYDGVPAGRVRNPDDPTTEERT. Over residues 54–65 the composition is skewed to basic and acidic residues; sequence RNPDDPTTEERT. A dEER motif is present at residues 61 to 64; it reads TEER.

It belongs to the RxLR effector family.

The protein resides in the secreted. It localises to the host cell. Its function is as follows. Secreted effector that acts as an elicitor of hypersensitive response (HR) specifically on plants carrying defense protein RPP5. The polypeptide is Avirulence protein ATR5 (Hyaloperonospora arabidopsidis (strain Emoy2) (Downy mildew agent)).